A 523-amino-acid chain; its full sequence is UDP-glucuronosyltransferase 2B16 (523 aa).

Positions 1–16 (LLLLLQLSCCFSSGSC) are cleaved as a signal peptide. Lys-129 bears the N6-succinyllysine mark. An N-linked (GlcNAc...) asparagine glycan is attached at Asn-309. A helical membrane pass occupies residues 487-503 (VIGFLLACLTITTYLVI).

Belongs to the UDP-glycosyltransferase family.

The protein resides in the microsome membrane. It is found in the endoplasmic reticulum membrane. The catalysed reaction is glucuronate acceptor + UDP-alpha-D-glucuronate = acceptor beta-D-glucuronoside + UDP + H(+). In terms of biological role, UDPGT is of major importance in the conjugation and subsequent elimination of potentially toxic xenobiotics and endogenous compounds. Acts on small phenolic agents such as 2-beta-naphthol and 4-methylumbelliferone as well as bulky phenolic compounds like 2-hydroxy- and 4-hydroxybiphenyl. In contrast to 2B13 it is active toward 4-hydroxyesterone. The polypeptide is UDP-glucuronosyltransferase 2B16 (UGT2B16) (Oryctolagus cuniculus (Rabbit)).